Here is a 146-residue protein sequence, read N- to C-terminus: Leghemoglobin 2 (146 aa).

The 145-residue stretch at 2 to 146 folds into the Globin domain; it reads GFTAQQDALV…LAAAIKKAMS (145 aa). The residue at position 30 (Y30) is a Nitrated tyrosine. S45 provides a ligand contact to heme b. Position 45 is a phosphoserine (S45). H61 provides a ligand contact to O2. 3 residues coordinate heme b: K64, H93, and K96. Y134 is subject to Nitrated tyrosine.

The protein belongs to the plant globin family. In terms of assembly, monomer. In terms of processing, nitrated in effective nodules and particularly in hypoxic conditions; this mechanism may play a protective role in the symbiosis by buffering toxic peroxynitrite NO(2)(-). Nitration level decrease during nodule senescence. Post-translationally, phosphorylation at Ser-45 disrupts the molecular environment of its porphyrin ring oxygen binding pocket, thus leading to a reduced oxygen consumption and to the delivery of oxygen O(2) to symbiosomes. As to expression, specifically and strongly expressed in root nodules and at low levels in seedlings.

It is found in the cytoplasm. The protein localises to the cytosol. The protein resides in the nucleus. Functionally, leghemoglobin that reversibly binds oxygen O(2) through a pentacoordinated heme iron. In root nodules, facilitates the diffusion of oxygen to the bacteroids while preventing the bacterial nitrogenase from being inactivated by buffering dioxygen, nitric oxide and carbon monoxide, and promoting the formation of reactive oxygen species (ROS, e.g. H(2)O(2)). This role is essential for symbiotic nitrogen fixation (SNF). The polypeptide is Leghemoglobin 2 (Lotus japonicus (Lotus corniculatus var. japonicus)).